Reading from the N-terminus, the 222-residue chain is 3,4-dihydroxy-2-butanone 4-phosphate synthase (222 aa).

D-ribulose 5-phosphate contacts are provided by residues 37-38 (RE), Asp42, 150-154 (RPGHT), and Glu174. Glu38 contributes to the Mg(2+) binding site. His153 lines the Mg(2+) pocket.

This sequence belongs to the DHBP synthase family. Homodimer. Mg(2+) is required as a cofactor. It depends on Mn(2+) as a cofactor.

The catalysed reaction is D-ribulose 5-phosphate = (2S)-2-hydroxy-3-oxobutyl phosphate + formate + H(+). Its pathway is cofactor biosynthesis; riboflavin biosynthesis; 2-hydroxy-3-oxobutyl phosphate from D-ribulose 5-phosphate: step 1/1. Functionally, catalyzes the conversion of D-ribulose 5-phosphate to formate and 3,4-dihydroxy-2-butanone 4-phosphate. This Chlorobium limicola (strain DSM 245 / NBRC 103803 / 6330) protein is 3,4-dihydroxy-2-butanone 4-phosphate synthase.